The sequence spans 329 residues: Deoxynucleotidyltransferase terminal-interacting protein 1 (329 aa).

Disordered regions lie at residues 1–22 (MGAT…GGLE) and 147–178 (KRGR…ILSS). The interval 56-147 (MTTSFTDPAI…RLTHELPGIK (92 aa)) is important for dimerization. Over residues 147–158 (KRGRQAEEECAH) the composition is skewed to basic and acidic residues. A DNA-binding region (a.T hook) is located at residues 159 to 173 (RGSPLPKKRKGRPPG). Ser-161 carries the post-translational modification Phosphoserine. Positions 164-170 (PKKRKGR) match the Nuclear localization signal motif. An important for DNA and nucleosome binding region spans residues 197–316 (REGPKWDPAR…MRKYMETLRT (120 aa)). Residues 216–237 (GSRANKALGMGGTRGRIYIKHP) constitute a DNA-binding region (H-T-H motif).

As to quaternary structure, monomer and homodimer. A minor proportion may form homotrimers. Interacts with ZNF541. Interacts with the terminal deoxynucleotidyltransferase DNTT. Interacts with TRERF1. Identified in a histone deacetylase complex that contains DNTTIP1, HDAC1 and MIDEAS; this complex assembles into a tetramer that contains four copies of each protein chain. Component of a histone deacetylase complex containing DNTTIP1, ZNF541, HDAC1 and HDAC2. Identified in a complex with KCTD19, HDAC1, HDAC2 and ZNF541.

Its subcellular location is the nucleus. In terms of biological role, increases DNTT terminal deoxynucleotidyltransferase activity (in vitro). Also acts as a transcriptional regulator, binding to the consensus sequence 5'-GNTGCATG-3' following an AT-tract. Associates with RAB20 promoter and positively regulates its transcription. Binds DNA and nucleosomes; may recruit HDAC1 complexes to nucleosomes or naked DNA. The polypeptide is Deoxynucleotidyltransferase terminal-interacting protein 1 (DNTTIP1) (Pongo abelii (Sumatran orangutan)).